Reading from the N-terminus, the 678-residue chain is Methionine--tRNA ligase (678 aa).

The 'HIGH' region motif lies at 12–22; that stretch reads PYANGPIHLGH. Zn(2+) is bound by residues Cys143, Cys146, Cys156, and Cys159. The 'KMSKS' region signature appears at 328-332; that stretch reads KMSKS. Lys331 is an ATP binding site. One can recognise a tRNA-binding domain in the interval 577-678; the sequence is DFSKVDLRIA…SGAQPGMRVK (102 aa).

This sequence belongs to the class-I aminoacyl-tRNA synthetase family. MetG type 1 subfamily. In terms of assembly, homodimer. It depends on Zn(2+) as a cofactor.

The protein resides in the cytoplasm. The enzyme catalyses tRNA(Met) + L-methionine + ATP = L-methionyl-tRNA(Met) + AMP + diphosphate. Its function is as follows. Is required not only for elongation of protein synthesis but also for the initiation of all mRNA translation through initiator tRNA(fMet) aminoacylation. This Acidithiobacillus ferrooxidans (strain ATCC 23270 / DSM 14882 / CIP 104768 / NCIMB 8455) (Ferrobacillus ferrooxidans (strain ATCC 23270)) protein is Methionine--tRNA ligase.